The following is a 234-amino-acid chain: Sugar fermentation stimulation protein homolog (234 aa).

This sequence belongs to the SfsA family.

The protein is Sugar fermentation stimulation protein homolog of Photobacterium profundum (strain SS9).